We begin with the raw amino-acid sequence, 379 residues long: Putative F-box protein At5g62660 (379 aa).

An F-box domain is found at 35 to 84; the sequence is ALVAPEIPLDLLIEILTKLPAKSLMRFKCVSKLWSSLIRSRFFSNCYLTV.

This Arabidopsis thaliana (Mouse-ear cress) protein is Putative F-box protein At5g62660.